Consider the following 282-residue polypeptide: Digeranylgeranylglyceryl phosphate synthase (282 aa).

Helical transmembrane passes span 15–35, 36–56, 81–100, 104–121, 131–151, 159–179, 201–221, 222–242, and 260–280; these read VIGAALGAIMGFLVSSQWYLE, LKGILLSALVVGLIAAGGYVI, VNKAKALSIALFIIGIALSI, IYALVIALVTAIGLIYYA, GNLLVATTTALSIFYGGLAFF, IIIPTLYAFFLTLIREIVKGI, KSWRIAKILLVLLLIISPLPF, FIGFNLIYLILLILVFIPFTI, and YLKISAISGIIAFLLGSLPFF.

Belongs to the UbiA prenyltransferase family. DGGGP synthase subfamily. Requires Mg(2+) as cofactor. Ca(2+) serves as cofactor.

Its subcellular location is the cell membrane. The catalysed reaction is sn-3-O-(geranylgeranyl)glycerol 1-phosphate + (2E,6E,10E)-geranylgeranyl diphosphate = 2,3-bis-O-(geranylgeranyl)-sn-glycerol 1-phosphate + diphosphate. Its pathway is membrane lipid metabolism; glycerophospholipid metabolism. Inhibited by EDTA in vitro. Prenyltransferase that catalyzes the transfer of the geranylgeranyl moiety of geranylgeranyl diphosphate (GGPP) to the C2 hydroxyl of (S)-3-O-geranylgeranylglyceryl phosphate (GGGP). This reaction is the second ether-bond-formation step in the biosynthesis of archaeal membrane lipids. Cannot use other prenyl donors, i.e. farnesyl diphosphate (FPP) and phytyl diphosphate. Moreover, 4-hydroxybenzoate, 1,4-dihydroxy 2-naphthoate, homogentisate, and alpha-glycerophosphate do not function as prenyl acceptor substrates. The protein is Digeranylgeranylglyceryl phosphate synthase (ubiA-2) of Saccharolobus solfataricus (strain ATCC 35092 / DSM 1617 / JCM 11322 / P2) (Sulfolobus solfataricus).